A 77-amino-acid chain; its full sequence is Acyl carrier protein (77 aa).

The Carrier domain maps to 2–77 (SDIADRVKKI…DAVKFISEAA (76 aa)). At S37 the chain carries O-(pantetheine 4'-phosphoryl)serine.

This sequence belongs to the acyl carrier protein (ACP) family. In terms of processing, 4'-phosphopantetheine is transferred from CoA to a specific serine of apo-ACP by AcpS. This modification is essential for activity because fatty acids are bound in thioester linkage to the sulfhydryl of the prosthetic group.

It localises to the cytoplasm. It participates in lipid metabolism; fatty acid biosynthesis. In terms of biological role, carrier of the growing fatty acid chain in fatty acid biosynthesis. The sequence is that of Acyl carrier protein from Cereibacter sphaeroides (strain ATCC 17029 / ATH 2.4.9) (Rhodobacter sphaeroides).